The following is a 284-amino-acid chain: ATP phosphoribosyltransferase (284 aa).

It belongs to the ATP phosphoribosyltransferase family. Long subfamily. Equilibrium between an active dimeric form, an inactive hexameric form and higher aggregates. Interconversion between the various forms is largely reversible and is influenced by the natural substrates and inhibitors of the enzyme. The cofactor is Mg(2+).

Its subcellular location is the cytoplasm. It carries out the reaction 1-(5-phospho-beta-D-ribosyl)-ATP + diphosphate = 5-phospho-alpha-D-ribose 1-diphosphate + ATP. It functions in the pathway amino-acid biosynthesis; L-histidine biosynthesis; L-histidine from 5-phospho-alpha-D-ribose 1-diphosphate: step 1/9. Feedback inhibited by histidine. Catalyzes the condensation of ATP and 5-phosphoribose 1-diphosphate to form N'-(5'-phosphoribosyl)-ATP (PR-ATP). Has a crucial role in the pathway because the rate of histidine biosynthesis seems to be controlled primarily by regulation of HisG enzymatic activity. The protein is ATP phosphoribosyltransferase of Mycobacterium avium (strain 104).